A 301-amino-acid chain; its full sequence is GTPase Era (301 aa).

An Era-type G domain is found at 7–175; it reads YCGFIAIVGR…AGIVRKHLPE (169 aa). A G1 region spans residues 15-22; sequence GRPNVGKS. 15-22 is a GTP binding site; sequence GRPNVGKS. Positions 41-45 are G2; the sequence is QTTRH. The tract at residues 62–65 is G3; it reads DTPG. GTP-binding positions include 62 to 66 and 124 to 127; these read DTPGL and NKVD. The interval 124-127 is G4; that stretch reads NKVD. Residues 154–156 form a G5 region; the sequence is LSA. One can recognise a KH type-2 domain in the interval 198-283; it reads IREKLMRFLG…HLELWVKVKS (86 aa).

This sequence belongs to the TRAFAC class TrmE-Era-EngA-EngB-Septin-like GTPase superfamily. Era GTPase family. As to quaternary structure, monomer.

The protein resides in the cytoplasm. It localises to the cell inner membrane. An essential GTPase that binds both GDP and GTP, with rapid nucleotide exchange. Plays a role in 16S rRNA processing and 30S ribosomal subunit biogenesis and possibly also in cell cycle regulation and energy metabolism. The sequence is that of GTPase Era from Enterobacter sp. (strain 638).